Reading from the N-terminus, the 87-residue chain is MKTFESLFAELSEKAATKQAGSLTVDELAKGTHFIGKKIVEEAGETWIAAEYEGADRTAEEMSQLIYHLQVMMIDRGITLEDIYKNL.

This sequence belongs to the PRA-PH family.

It localises to the cytoplasm. It carries out the reaction 1-(5-phospho-beta-D-ribosyl)-ATP + H2O = 1-(5-phospho-beta-D-ribosyl)-5'-AMP + diphosphate + H(+). Its pathway is amino-acid biosynthesis; L-histidine biosynthesis; L-histidine from 5-phospho-alpha-D-ribose 1-diphosphate: step 2/9. The sequence is that of Phosphoribosyl-ATP pyrophosphatase from Bifidobacterium adolescentis (strain ATCC 15703 / DSM 20083 / NCTC 11814 / E194a).